A 258-amino-acid chain; its full sequence is Ribosomal RNA small subunit methyltransferase A (258 aa).

S-adenosyl-L-methionine is bound by residues His13, Leu15, Gly40, Glu61, Asp85, and Asn106.

It belongs to the class I-like SAM-binding methyltransferase superfamily. rRNA adenine N(6)-methyltransferase family. RsmA subfamily.

The protein resides in the cytoplasm. It carries out the reaction adenosine(1518)/adenosine(1519) in 16S rRNA + 4 S-adenosyl-L-methionine = N(6)-dimethyladenosine(1518)/N(6)-dimethyladenosine(1519) in 16S rRNA + 4 S-adenosyl-L-homocysteine + 4 H(+). Functionally, specifically dimethylates two adjacent adenosines (A1518 and A1519) in the loop of a conserved hairpin near the 3'-end of 16S rRNA in the 30S particle. May play a critical role in biogenesis of 30S subunits. The sequence is that of Ribosomal RNA small subunit methyltransferase A from Porphyromonas gingivalis (strain ATCC 33277 / DSM 20709 / CIP 103683 / JCM 12257 / NCTC 11834 / 2561).